The chain runs to 158 residues: Cell number regulator 11 (158 aa).

2 helical membrane-spanning segments follow: residues 49 to 67 (FGDL…VTFG) and 78 to 94 (TCCM…TIGW).

It belongs to the cornifelin family.

The protein resides in the membrane. This is Cell number regulator 11 (CNR11) from Zea mays (Maize).